The following is a 301-amino-acid chain: UDP-N-acetylenolpyruvoylglucosamine reductase 1 (301 aa).

In terms of domain architecture, FAD-binding PCMH-type spans 29–196; that stretch reads KIGGPADILI…LEAEFQLQIG (168 aa). Residue Arg174 is part of the active site. Ser225 acts as the Proton donor in catalysis. The active site involves Glu295.

It belongs to the MurB family. The cofactor is FAD.

It localises to the cytoplasm. The enzyme catalyses UDP-N-acetyl-alpha-D-muramate + NADP(+) = UDP-N-acetyl-3-O-(1-carboxyvinyl)-alpha-D-glucosamine + NADPH + H(+). It functions in the pathway cell wall biogenesis; peptidoglycan biosynthesis. Functionally, cell wall formation. This Bacillus thuringiensis subsp. konkukian (strain 97-27) protein is UDP-N-acetylenolpyruvoylglucosamine reductase 1.